Reading from the N-terminus, the 85-residue chain is ATP synthase subunit c (85 aa).

The next 2 membrane-spanning stretches (helical) occupy residues 10-30 (IAVSIMIGLAALGTALGFGIL) and 53-73 (FIVAGLIDAIAMIGVAVALLF).

It belongs to the ATPase C chain family. In terms of assembly, F-type ATPases have 2 components, F(1) - the catalytic core - and F(0) - the membrane proton channel. F(1) has five subunits: alpha(3), beta(3), gamma(1), delta(1), epsilon(1). F(0) has three main subunits: a(1), b(2) and c(10-14). The alpha and beta chains form an alternating ring which encloses part of the gamma chain. F(1) is attached to F(0) by a central stalk formed by the gamma and epsilon chains, while a peripheral stalk is formed by the delta and b chains.

It is found in the cell inner membrane. In terms of biological role, f(1)F(0) ATP synthase produces ATP from ADP in the presence of a proton or sodium gradient. F-type ATPases consist of two structural domains, F(1) containing the extramembraneous catalytic core and F(0) containing the membrane proton channel, linked together by a central stalk and a peripheral stalk. During catalysis, ATP synthesis in the catalytic domain of F(1) is coupled via a rotary mechanism of the central stalk subunits to proton translocation. Key component of the F(0) channel; it plays a direct role in translocation across the membrane. A homomeric c-ring of between 10-14 subunits forms the central stalk rotor element with the F(1) delta and epsilon subunits. This is ATP synthase subunit c from Idiomarina loihiensis (strain ATCC BAA-735 / DSM 15497 / L2-TR).